The chain runs to 341 residues: UDP-3-O-acylglucosamine N-acyltransferase (341 aa).

The Proton acceptor role is filled by H241.

The protein belongs to the transferase hexapeptide repeat family. LpxD subfamily. As to quaternary structure, homotrimer.

The enzyme catalyses a UDP-3-O-[(3R)-3-hydroxyacyl]-alpha-D-glucosamine + a (3R)-hydroxyacyl-[ACP] = a UDP-2-N,3-O-bis[(3R)-3-hydroxyacyl]-alpha-D-glucosamine + holo-[ACP] + H(+). It participates in bacterial outer membrane biogenesis; LPS lipid A biosynthesis. Its function is as follows. Catalyzes the N-acylation of UDP-3-O-acylglucosamine using 3-hydroxyacyl-ACP as the acyl donor. Is involved in the biosynthesis of lipid A, a phosphorylated glycolipid that anchors the lipopolysaccharide to the outer membrane of the cell. This is UDP-3-O-acylglucosamine N-acyltransferase from Haemophilus ducreyi (strain 35000HP / ATCC 700724).